Reading from the N-terminus, the 187-residue chain is Choriogonadotropin subunit beta variant 1 (187 aa).

The first 50 residues, 1 to 50 (MSTFPVLAEDIPLRERHVKGRVDPHFRAPKMEMFQRLLLLLLLSMGGTWA), serve as a signal peptide directing secretion. Intrachain disulfides connect C59–C107, C73–C122, C76–C160, C84–C138, C88–C140, and C143–C150. N-linked (GlcNAc...) asparagine glycans are attached at residues N63 and N80. Residues 161-187 (DDPRFQDSSSSKAPPPSLPSPSRLPGP) are disordered. The segment covering 173-187 (APPPSLPSPSRLPGP) has biased composition (pro residues).

It belongs to the glycoprotein hormones subunit beta family. As to expression, expressed in placenta, testis and pituitary.

The protein localises to the secreted. In Homo sapiens (Human), this protein is Choriogonadotropin subunit beta variant 1 (CGB1).